Reading from the N-terminus, the 199-residue chain is Chaperone protein TorD (199 aa).

It belongs to the TorD/DmsD family. TorD subfamily.

The protein localises to the cytoplasm. Its function is as follows. Involved in the biogenesis of TorA. Acts on TorA before the insertion of the molybdenum cofactor and, as a result, probably favors a conformation of the apoenzyme that is competent for acquiring the cofactor. This chain is Chaperone protein TorD, found in Escherichia coli (strain K12 / MC4100 / BW2952).